We begin with the raw amino-acid sequence, 191 residues long: Protein YceI (191 aa).

An N-terminal signal peptide occupies residues 1–22; it reads MKKNLLGFTFASLLFTTGSAVA.

The protein belongs to the UPF0312 family. Type 1 subfamily.

The protein resides in the periplasm. The sequence is that of Protein YceI from Salmonella agona (strain SL483).